We begin with the raw amino-acid sequence, 438 residues long: Transcriptional enhancer factor TEF-3 (438 aa).

Positions 1-18 are enriched in polar residues; that stretch reads MTSEWSSPASPEGSNDSG. 2 disordered regions span residues 1-36 and 195-217; these read MTSE…GVWS and QPSL…STPA. The segment at residues 28–104 is a DNA-binding region (TEA); that stretch reads DNDAEGVWSP…QVLARRKARE (77 aa). Positions 205–216 are enriched in low complexity; it reads SPTGLPPSSSTP.

Enriched in cardiac and skeletal muscle.

It is found in the nucleus. Transcription factor which plays a key role in the Hippo signaling pathway, a pathway involved in organ size control and tumor suppression by restricting proliferation and promoting apoptosis. The core of this pathway is composed of a kinase cascade wherein MST1/MST2, in complex with its regulatory protein SAV1, phosphorylates and activates LATS1/2 in complex with its regulatory protein MOB1, which in turn phosphorylates and inactivates YAP1 oncoprotein and WWTR1/TAZ. Binds m-cat elements from muscle-specific promoters and differentially activate transcription. In terms of biological role, isoform B has probably a transactivation capacity that is lacking in the other isoforms. Isoform D may be defective in DNA binding. This Gallus gallus (Chicken) protein is Transcriptional enhancer factor TEF-3 (TEAD4).